The sequence spans 102 residues: Small ribosomal subunit protein bS6 (102 aa).

The protein belongs to the bacterial ribosomal protein bS6 family.

Functionally, binds together with bS18 to 16S ribosomal RNA. The sequence is that of Small ribosomal subunit protein bS6 from Deinococcus deserti (strain DSM 17065 / CIP 109153 / LMG 22923 / VCD115).